The following is a 68-amino-acid chain: Metallothionein (68 aa).

Belongs to the metallothionein superfamily. Type 4 family.

In terms of biological role, metallothioneins have a high content of cysteine residues that bind various heavy metals. The polypeptide is Metallothionein (MT1) (Lytechinus pictus (Painted sea urchin)).